The chain runs to 309 residues: NAD-dependent protein deacylase sirtuin-5A, mitochondrial (309 aa).

A mitochondrion-targeting transit peptide spans 1–35; sequence MILLTFHTRRLVSHAYCGLKPASQKKSIALEMTRP. A Deacetylase sirtuin-type domain is found at 36–306; the sequence is SSNLADFREA…PPALARHETE (271 aa). 57 to 76 provides a ligand contact to NAD(+); sequence GAGVSAESGVPTFRGAGGYW. Tyrosine 101 and arginine 104 together coordinate substrate. 139–142 is an NAD(+) binding site; sequence QNID. Histidine 157 serves as the catalytic Proton acceptor. Residues cysteine 165, cysteine 168, cysteine 206, and cysteine 211 each coordinate Zn(2+). NAD(+) contacts are provided by residues 248-250, 274-276, and cysteine 292; these read GTS and NME.

The protein belongs to the sirtuin family. Class III subfamily. Zn(2+) serves as cofactor.

It is found in the mitochondrion. The protein resides in the cytoplasm. It localises to the cytosol. The protein localises to the nucleus. It catalyses the reaction N(6)-malonyl-L-lysyl-[protein] + NAD(+) + H2O = 2''-O-malonyl-ADP-D-ribose + nicotinamide + L-lysyl-[protein]. The catalysed reaction is N(6)-succinyl-L-lysyl-[protein] + NAD(+) + H2O = 2''-O-succinyl-ADP-D-ribose + nicotinamide + L-lysyl-[protein]. The enzyme catalyses N(6)-glutaryl-L-lysyl-[protein] + NAD(+) + H2O = 2''-O-glutaryl-ADP-D-ribose + nicotinamide + L-lysyl-[protein]. NAD-dependent lysine demalonylase, desuccinylase and deglutarylase that specifically removes malonyl, succinyl and glutaryl groups on target proteins. Has weak NAD-dependent protein deacetylase activity; however this activity may not be physiologically relevant in vivo. The sequence is that of NAD-dependent protein deacylase sirtuin-5A, mitochondrial (sirt5-a) from Xenopus laevis (African clawed frog).